The sequence spans 442 residues: Citrate synthase (442 aa).

Catalysis depends on residues histidine 274, histidine 320, and aspartate 375.

The protein belongs to the citrate synthase family.

The enzyme catalyses oxaloacetate + acetyl-CoA + H2O = citrate + CoA + H(+). The protein operates within carbohydrate metabolism; tricarboxylic acid cycle; isocitrate from oxaloacetate: step 1/2. Its function is as follows. Catalyzes both citrate generation and citrate cleavage. Part of a reversible tricarboxylic acid (TCA) cycle that can fix carbon dioxide autotrophically and may represent an ancestral mode of the conventional reductive TCA (rTCA) cycle. The direction is controlled by the available carbon source(s). This is Citrate synthase from Thermosulfidibacter takaii (strain DSM 17441 / JCM 13301 / NBRC 103674 / ABI70S6).